The sequence spans 91 residues: Potassium channel toxin TstKMK (91 aa).

An N-terminal signal peptide occupies residues Met-1–Ala-25. The propeptide occupies Gly-26–Ala-42. The 34-residue stretch at Glu-58–Leu-91 folds into the BetaSPN-type CS-alpha/beta domain. Cystine bridges form between Cys-61–Cys-81, Cys-68–Cys-86, and Cys-72–Cys-88.

This sequence belongs to the long chain scorpion toxin family. Class 2 subfamily. Expressed by the venom gland.

The protein resides in the secreted. Functionally, the full peptide presents antibacterial and cytotoxic activities. The synthetic C-terminus (AA 33-76) inhibits voltage-gated potassium channels Kv1.1/KCNA1, Kv1.2/KCNA2, and Kv1.3/KCNA3. The sequence is that of Potassium channel toxin TstKMK from Tityus stigmurus (Brazilian scorpion).